We begin with the raw amino-acid sequence, 932 residues long: MAALQKLPHCRKLVLLCFLLATLWEARAGQIRYSVREEIDRGSFVGNIAKDLGLEPLALAEQGVRIVSRGRSQLFALNPRSGSLVTANRIDREELCAQSAPCLLNFNILLEDKLTIYSVEVEITDINDNAPRFGVEELELKISETTTPGFRIPLKNAHDADVGENALQKYALNPNDHFSLDVRRGADGNKYPELVLERSLDREEEAVHHLVLVASDGGDPVLSGTSRICVKVLDANDNAPVFTQPEYRISIPENTLVGTRILTVTATDADEGYYAQVVYFLEKSPGETSEVFELKSTSGELTIIKDLDYEDATFHEIDIEAQDGPGLLTRAKVIVTVLDVNDNAPEFYMTSATSSVSEDSLPGTIIGLFNVHDRDSGQNAFTTCSLPEDLPFKLEKSVDNYYRLVTTRALDREQFSFYNITLTAKDGGNPSLSTDAHILLQVADINDNAPAFSRTSYSTYIPENNPRGASVFSVTAHDPDSNDNAHVTYSFAEDTVQGAPLSSYISINSDTGVLYALRSFDYEQLRDLQVWVIARDSGNPPLSSNVSLSLFVLDQNDNAPEILYPAFPTDGSTGVELAPRSAEPGYLVTKVVAVDRDSGQNAWLSYHLLKASEPGLFSVGLHTGEVRTARALLDRDALKQSLVVAIQDHGQPPLSATVTLTVAVADRIPDILADLGSLEPSAIPNDSDLTLYLVVAVAAVSCVFLAFVIVLLAHRLRRWHKSRLLQASGGSLTGMQSSHFVGVDGVRAFLQTYSHEVSLTADSRKSHLIFPQPNYADTLISQESCEKKDFLSAPQSLLEEEREETFSQQAPPNTDWRFSQAQRPGTSGSQNGDDTGTWPNNQFDTEMLQAMILASASEAADGSSTLGGGAGTMGLSARYGPQFTLQHVPDYRQNVYIPGSNATLTNAAGKRDGKAPAGGNGNKKKSGKKEKK.

A signal peptide spans 1–28 (MAALQKLPHCRKLVLLCFLLATLWEARA). Cadherin domains are found at residues 29 to 133 (GQIR…APRF), 134 to 242 (GVEE…APVF), 243 to 347 (TQPE…APEF), 348 to 452 (YMTS…APAF), 453 to 562 (SRTS…APEI), and 570 to 682 (DGST…EPSA). Residues 29-692 (GQIRYSVREE…IPNDSDLTLY (664 aa)) are Extracellular-facing. Asn419 and Asn545 each carry an N-linked (GlcNAc...) asparagine glycan. The N-linked (GlcNAc...) asparagine glycan is linked to Asn685. A helical membrane pass occupies residues 693–713 (LVVAVAAVSCVFLAFVIVLLA). Residues 714-932 (HRLRRWHKSR…KKKSGKKEKK (219 aa)) lie on the Cytoplasmic side of the membrane. 2 disordered regions span residues 798 to 841 (LEEE…WPNN) and 902 to 932 (ATLTNAAGKRDGKAPAGGNGNKKKSGKKEKK). A compositionally biased stretch (polar residues) spans 806–841 (FSQQAPPNTDWRFSQAQRPGTSGSQNGDDTGTWPNN). The span at 922 to 932 (NKKKSGKKEKK) shows a compositional bias: basic residues.

It is found in the cell membrane. Its function is as follows. Potential calcium-dependent cell-adhesion protein. May be involved in the establishment and maintenance of specific neuronal connections in the brain. This chain is Protocadherin gamma-A2 (PCDHGA2), found in Homo sapiens (Human).